The following is a 431-amino-acid chain: MSVNVNRSVSDQFYRYKMPRLIAKVEGKGNGIKTVIVNMVDVAKALNRPPTYPTKYFGCELGAQTQFDVKNDRYIVNGSHEANKLQDMLDGFIKKFVLCPECENPETDLHVNPKKQTIGNSCKACGYRGMLDTHHKLCTFILKNPPENSDSGTGKKEKEKKNRKGKDKENGSVSSSETPPPPPPPNEISPPPHTMEEEEDDDWGEDTTEEAQRRRMDEISDHAKVLTLSDDLERTIEERVNILFDFVKKKKEEGVIDSSDKEIVAEAERLDVKAMGPLVLTEVLFNEKIREQIKKYRRHFLRFCHNNKKAQRYLLHGLECVVAMHQAQLISKIPHILKEMYDADLLEEEVIISWSEKASKKYVSKELAKEIRVKAEPFIKWLKEAEEESSGGEEDDEDENIEVVYSKTASVPKVETVKSDNKDDDIDIDAI.

The residue at position 10 (Ser-10) is a Phosphoserine. GTP is bound at residue 27–34 (GKGNGIKT). Residues 143–216 (KNPPENSDSG…TTEEAQRRRM (74 aa)) are disordered. Residues 153–170 (TGKKEKEKKNRKGKDKEN) are compositionally biased toward basic and acidic residues. A compositionally biased stretch (pro residues) spans 178 to 193 (TPPPPPPPNEISPPPH). Over residues 196-209 (EEEEDDDWGEDTTE) the composition is skewed to acidic residues. Thr-227 is modified (phosphothreonine). A phosphoserine mark is found at Ser-229, Ser-389, Ser-390, and Ser-410. In terms of domain architecture, W2 spans 233–392 (ERTIEERVNI…KEAEEESSGG (160 aa)). Glycyl lysine isopeptide (Lys-Gly) (interchain with G-Cter in SUMO2) cross-links involve residues Lys-413 and Lys-418. Ser-419 carries the phosphoserine modification.

It belongs to the eIF-2-beta/eIF-5 family. As to quaternary structure, component of the 43S pre-initiation complex (43S PIC), which is composed of the 40S ribosomal subunit, EIF1, eIF1A (EIF1AX), eIF3 complex, EIF5 and eIF2-GTP-initiator tRNA complex (eIF2 ternary complex). Interacts with eIF1A (EIF1AX) during scanning. Interacts through its C-terminal domain (CTD) with EIF1 or with eIF2-beta (EIF2S2) (mutually exclusive) through a common binding site. Interacts through its C-terminal domain (CTD) with the CTD of EIF5B. Interacts with FMR1 isoform 6; this interaction occurs in a RNA-dependent manner.

It localises to the cytoplasm. Functionally, component of the 43S pre-initiation complex (43S PIC), which binds to the mRNA cap-proximal region, scans mRNA 5'-untranslated region, and locates the initiation codon. In this complex, acts as a GTPase-activating protein, by promoting GTP hydrolysis by eIF2G (EIF2S3). During scanning, interacts with both EIF1 (via its C-terminal domain (CTD)) and EIF1A (via its NTD). This interaction with EIF1A contributes to the maintenance of EIF1 within the open 43S PIC. When start codon is recognized, EIF5, via its NTD, induces eIF2G (EIF2S3) to hydrolyze the GTP. Start codon recognition also induces a conformational change of the PIC to a closed state. This change increases the affinity of EIF5-CTD for EIF2-beta (EIF2S2), which allows the release, by an indirect mechanism, of EIF1 from the PIC. Finally, EIF5 stabilizes the PIC in its closed conformation. The sequence is that of Eukaryotic translation initiation factor 5 (EIF5) from Pongo abelii (Sumatran orangutan).